A 273-amino-acid chain; its full sequence is Putative pyruvate, phosphate dikinase regulatory protein 2 (273 aa).

151-158 is a binding site for ADP; that stretch reads GVSRTSKT.

It belongs to the pyruvate, phosphate/water dikinase regulatory protein family. PDRP subfamily.

The enzyme catalyses N(tele)-phospho-L-histidyl/L-threonyl-[pyruvate, phosphate dikinase] + ADP = N(tele)-phospho-L-histidyl/O-phospho-L-threonyl-[pyruvate, phosphate dikinase] + AMP + H(+). The catalysed reaction is N(tele)-phospho-L-histidyl/O-phospho-L-threonyl-[pyruvate, phosphate dikinase] + phosphate + H(+) = N(tele)-phospho-L-histidyl/L-threonyl-[pyruvate, phosphate dikinase] + diphosphate. Bifunctional serine/threonine kinase and phosphorylase involved in the regulation of the pyruvate, phosphate dikinase (PPDK) by catalyzing its phosphorylation/dephosphorylation. The chain is Putative pyruvate, phosphate dikinase regulatory protein 2 from Syntrophomonas wolfei subsp. wolfei (strain DSM 2245B / Goettingen).